The following is a 121-amino-acid chain: Small ribosomal subunit protein uS12 (121 aa).

Positions 1–25 (MPTINQLVRKNRKQKKSQSKSPVLE) are disordered. A compositionally biased stretch (basic residues) spans 9–18 (RKNRKQKKSQ). A 3-methylthioaspartic acid modification is found at D89.

This sequence belongs to the universal ribosomal protein uS12 family. Part of the 30S ribosomal subunit. Contacts proteins S8 and S17. May interact with IF1 in the 30S initiation complex.

Its function is as follows. With S4 and S5 plays an important role in translational accuracy. Interacts with and stabilizes bases of the 16S rRNA that are involved in tRNA selection in the A site and with the mRNA backbone. Located at the interface of the 30S and 50S subunits, it traverses the body of the 30S subunit contacting proteins on the other side and probably holding the rRNA structure together. The combined cluster of proteins S8, S12 and S17 appears to hold together the shoulder and platform of the 30S subunit. The protein is Small ribosomal subunit protein uS12 of Rhodopirellula baltica (strain DSM 10527 / NCIMB 13988 / SH1).